The chain runs to 144 residues: Deoxyuridine 5'-triphosphate nucleotidohydrolase (144 aa).

S66, R133, F138, and G139 together coordinate dUMP.

Belongs to the dUTPase family. As to quaternary structure, homotrimer. Requires Mg(2+) as cofactor.

The enzyme catalyses dUTP + H2O = dUMP + diphosphate + H(+). Its pathway is pyrimidine metabolism; dUMP biosynthesis; dUMP from dCTP (dUTP route): step 2/2. In terms of biological role, involved in nucleotide metabolism via production of dUMP, the immediate precursor of thymidine nucleotides, and decreases the intracellular concentration of dUTP so that uracil cannot be incorporated into DNA. The sequence is that of Deoxyuridine 5'-triphosphate nucleotidohydrolase (DUT1) from Encephalitozoon cuniculi (strain GB-M1) (Microsporidian parasite).